The primary structure comprises 249 residues: Ubiquinone/menaquinone biosynthesis C-methyltransferase UbiE (249 aa).

S-adenosyl-L-methionine-binding positions include Thr-72, Asp-93, and 121–122 (DA).

Belongs to the class I-like SAM-binding methyltransferase superfamily. MenG/UbiE family.

It catalyses the reaction a 2-demethylmenaquinol + S-adenosyl-L-methionine = a menaquinol + S-adenosyl-L-homocysteine + H(+). It carries out the reaction a 2-methoxy-6-(all-trans-polyprenyl)benzene-1,4-diol + S-adenosyl-L-methionine = a 5-methoxy-2-methyl-3-(all-trans-polyprenyl)benzene-1,4-diol + S-adenosyl-L-homocysteine + H(+). It participates in quinol/quinone metabolism; menaquinone biosynthesis; menaquinol from 1,4-dihydroxy-2-naphthoate: step 2/2. Its pathway is cofactor biosynthesis; ubiquinone biosynthesis. Methyltransferase required for the conversion of demethylmenaquinol (DMKH2) to menaquinol (MKH2) and the conversion of 2-polyprenyl-6-methoxy-1,4-benzoquinol (DDMQH2) to 2-polyprenyl-3-methyl-6-methoxy-1,4-benzoquinol (DMQH2). In Saccharophagus degradans (strain 2-40 / ATCC 43961 / DSM 17024), this protein is Ubiquinone/menaquinone biosynthesis C-methyltransferase UbiE.